The sequence spans 352 residues: Chorismate synthase (352 aa).

Arginine 48 provides a ligand contact to NADP(+). Residues 125–127 (RSS), 238–239 (NA), glycine 278, 293–297 (KPTSS), and arginine 319 contribute to the FMN site.

The protein belongs to the chorismate synthase family. As to quaternary structure, homotetramer. FMNH2 is required as a cofactor.

It carries out the reaction 5-O-(1-carboxyvinyl)-3-phosphoshikimate = chorismate + phosphate. Its pathway is metabolic intermediate biosynthesis; chorismate biosynthesis; chorismate from D-erythrose 4-phosphate and phosphoenolpyruvate: step 7/7. Catalyzes the anti-1,4-elimination of the C-3 phosphate and the C-6 proR hydrogen from 5-enolpyruvylshikimate-3-phosphate (EPSP) to yield chorismate, which is the branch point compound that serves as the starting substrate for the three terminal pathways of aromatic amino acid biosynthesis. This reaction introduces a second double bond into the aromatic ring system. This chain is Chorismate synthase, found in Legionella pneumophila (strain Lens).